Here is a 228-residue protein sequence, read N- to C-terminus: Non-specific lipid-transfer protein EPAD1 (228 aa).

Residues 1–24 form the signal peptide; that stretch reads MERSHLAVLLGLLAFAAGVPAAAA. Disulfide bonds link cysteine 40-cysteine 62, cysteine 63-cysteine 105, and cysteine 78-cysteine 119. N-linked (GlcNAc...) asparagine glycosylation occurs at asparagine 94. The disordered stretch occupies residues 124 to 207; sequence PPASIVTAPP…PPRSGASSSL (84 aa). A compositionally biased stretch (pro residues) spans 145–162; that stretch reads REAPPPPPAAEKLSPPPQ.

It belongs to the plant LTP family. As to expression, expressed in young panicles. Specifically expressed in pollen mother cells and young microspores.

Its subcellular location is the cell membrane. In terms of biological role, plant non-specific lipid-transfer protein that binds phospholipids in vitro. Required for correct pollen exine patterning by controlling the continuity and homogeneity of the primexine distribution. This chain is Non-specific lipid-transfer protein EPAD1, found in Oryza sativa subsp. japonica (Rice).